Consider the following 325-residue polypeptide: Hexaprenyl-diphosphate synthase large subunit ((2E,6E)-farnesyl-diphosphate specific) (325 aa).

Isopentenyl diphosphate-binding residues include K45, R48, and H77. Positions 84, 88, and 93 each coordinate all-trans-hexaprenyl diphosphate. Positions 84 and 88 each coordinate Mg(2+). Isopentenyl diphosphate is bound at residue R94. Residues K170, T171, and Q208 each coordinate all-trans-hexaprenyl diphosphate.

The protein belongs to the FPP/GGPP synthase family. As to quaternary structure, dimer of heterodimer or heterotetramer composed of a small (Hexs-a) and large (Hexs-B) subunit. Mg(2+) serves as cofactor.

It catalyses the reaction 3 isopentenyl diphosphate + (2E,6E)-farnesyl diphosphate = all-trans-hexaprenyl diphosphate + 3 diphosphate. Functionally, catalyzes the condensation of three molecules of isopentenyl diphosphate with farnesyl diphosphate (FPP) to yield (all-E)-hexaprenyl diphosphate (HexPP; C30), the precursor of the prenyl side chain of menaquinone-6. Large subunit Hexs-B catalyzes the condensation reaction and the final product chain length is cooperatively regulated by both the Hexs-A and Hexs-B subunits using the whole size of the hydrophobic cleft as a ruler. This is Hexaprenyl-diphosphate synthase large subunit ((2E,6E)-farnesyl-diphosphate specific) (hexs-b) from Micrococcus luteus (Micrococcus lysodeikticus).